We begin with the raw amino-acid sequence, 466 residues long: Argininosuccinate lyase (466 aa).

It belongs to the lyase 1 family. Argininosuccinate lyase subfamily.

The protein resides in the cytoplasm. It carries out the reaction 2-(N(omega)-L-arginino)succinate = fumarate + L-arginine. It participates in amino-acid biosynthesis; L-arginine biosynthesis; L-arginine from L-ornithine and carbamoyl phosphate: step 3/3. The sequence is that of Argininosuccinate lyase from Bartonella tribocorum (strain CIP 105476 / IBS 506).